The sequence spans 546 residues: FAD-dependent monooxygenase (546 aa).

A signal peptide spans methionine 1–alanine 17. Isoleucine 106 lines the FAD pocket. N-linked (GlcNAc...) asparagine glycans are attached at residues asparagine 239 and asparagine 343.

It belongs to the FAD-binding monooxygenase family. The cofactor is FAD.

It functions in the pathway antifungal biosynthesis. In terms of biological role, FAD-dependent monooxygenase; part of the gene cluster that mediates the biosynthesis of the tetrahydropyranyl antifungal agent lanomycin that acts as an inhibitor of CYP51 and blocks the ergosterol biosynthesis. The biosynthesis probably begins with the formation of an hexaketide, followed by methionine mediated alkylation of C-2 and C-6, and methylation of the reduced C-3 oxygen, pyran forming reductive ring closure, oxygenation of C-4, beta-keto reduction, enoyl reduction and dehydration of the remaining oxygens, and finally, acylation with glycine to complete the biosynthesis. The chain is FAD-dependent monooxygenase from Pyrenophora dematioidea (Helminthosporium dematioideum).